Reading from the N-terminus, the 1514-residue chain is Helicase SWR1 (1514 aa).

One can recognise an HSA domain in the interval 339–411 (ISYFYKQQDL…EERHKKSLAR (73 aa)). Residues 465-480 (QVNDDGRSSTPSSDSN) show a composition bias toward polar residues. Disordered stretches follow at residues 465-524 (QVND…PTDE) and 538-641 (FNGS…KDQV). A compositionally biased stretch (acidic residues) spans 484-508 (SESDDDMDDELSTSSDEDEEVDADV). Over residues 513-524 (SPASTEATPTDE) the composition is skewed to polar residues. Residues 547-563 (SRNKDEKFPTLDKHESS) show a composition bias toward basic and acidic residues. The segment covering 564 to 586 (SSESSVMTGEESSIYSSSENESQ) has biased composition (low complexity). The span at 588 to 597 (ENDRESDDKT) shows a compositional bias: basic and acidic residues. The span at 612–623 (SDGDLDLDDSED) shows a compositional bias: acidic residues. One can recognise a Helicase ATP-binding domain in the interval 708-873 (ASLYNNHTNG…WSLLYFLMPQ (166 aa)). 721 to 728 (DEMGLGKT) serves as a coordination point for ATP. The DEAH box signature appears at 824-827 (DEAH). The Helicase C-terminal domain occupies 1247-1400 (KLQKLAILLQ…NVVIQEGDFT (154 aa)). The disordered stretch occupies residues 1469-1490 (NDDFDESTEKKAANEEEENHAE). A compositionally biased stretch (basic and acidic residues) spans 1475–1490 (STEKKAANEEEENHAE).

The protein belongs to the SNF2/RAD54 helicase family. SWR1 subfamily. In terms of assembly, component of the SWR1 chromatin-remodeling complex composed of at least ACT1, ARP4, RVB1, RVB2, ARP6, YAF9, VPS71, VPS72, SWC3, SWC4, SWC5, SWC7 and SWR1, and perhaps BDF1.

Its subcellular location is the nucleus. It carries out the reaction ATP + H2O = ADP + phosphate + H(+). In terms of biological role, catalytic component of the SWR1 complex which mediates the ATP-dependent exchange of histone H2A for the H2A variant HZT1 leading to transcriptional regulation of selected genes by chromatin remodeling. This is Helicase SWR1 (SWR1) from Saccharomyces cerevisiae (strain ATCC 204508 / S288c) (Baker's yeast).